The following is a 319-amino-acid chain: Putative G-protein coupled receptor B0244.7 (319 aa).

A glycan (N-linked (GlcNAc...) asparagine) is linked at asparagine 28. The next 6 helical transmembrane spans lie at 49–69 (AIFIIPCCMSFFALFLNIYIF), 107–127 (LPVIIFLTHFNFWVIALFIIF), 131–151 (SFLSFIGGMVGTTLTIYIAVV), 166–186 (VLLILLLWVSAITVAISCGIV), 206–226 (GPVLIFGIVCIATAFSICLVI), and 261–281 (LFAGFFVFATMAIFEIASAII).

The protein belongs to the G-protein coupled receptor 1 family. B0244 subfamily.

It is found in the cell membrane. This Caenorhabditis elegans protein is Putative G-protein coupled receptor B0244.7.